A 161-amino-acid polypeptide reads, in one-letter code: Anthranilate 1,2-dioxygenase small subunit (161 aa).

The protein belongs to the bacterial ring-hydroxylating dioxygenase beta subunit family. As to quaternary structure, part of a multicomponent enzyme system composed of a reductase (AndAa), a ferredoxin (AndAb) and a two-subunit oxygenase component (AndAc and AndAd).

The catalysed reaction is anthranilate + NADH + O2 + 3 H(+) = catechol + NH4(+) + CO2 + NAD(+). It carries out the reaction anthranilate + NADPH + O2 + 3 H(+) = catechol + NH4(+) + CO2 + NADP(+). It functions in the pathway aromatic compound metabolism; anthranilate degradation via hydroxylation; catechol from anthranilate: step 1/1. Its function is as follows. Oxygenase component of anthranilate dioxygenase multicomponent enzyme system which catalyzes the incorporation of both atoms of molecular oxygen into anthranilate to form catechol. Can also act on benzoate and salicylate but not on 2-chlorobenzoate or o-toluate. The sequence is that of Anthranilate 1,2-dioxygenase small subunit from Burkholderia cepacia (Pseudomonas cepacia).